Here is a 271-residue protein sequence, read N- to C-terminus: Tumor necrosis factor receptor superfamily member 4 (271 aa).

An N-terminal signal peptide occupies residues 1–19 (MYVWVQQPTAFLLLGLSLG). Over 20–210 (VTVKLNCVKD…TPTLVAPEGP (191 aa)) the chain is Extracellular. TNFR-Cys repeat units follow at residues 25–60 (NCVK…TVCH) and 61–102 (PCEP…DTVC). Disulfide bonds link cysteine 26–cysteine 37, cysteine 38–cysteine 51, cysteine 41–cysteine 59, cysteine 62–cysteine 76, cysteine 79–cysteine 94, cysteine 82–cysteine 102, cysteine 104–cysteine 122, and cysteine 125–cysteine 138. The stretch at 103–123 (QCRPGTQPRQDSSHKLGVDCV) is one TNFR-Cys 3; truncated repeat. The TNFR-Cys 4 repeat unit spans residues 124–164 (PCPPGHFSPGSNQACKPWTNCTLSGKQIRHPASNSLDTVCE). N-linked (GlcNAc...) asparagine glycosylation occurs at asparagine 143. Residues cysteine 144 and cysteine 163 are joined by a disulfide bond. Residues 211 to 235 (AFAVILGLGLGLLAPLTVLLALYLL) form a helical membrane-spanning segment. Topologically, residues 236-271 (RKAWRSPNTPKPCWGNSFRTPIQEEQTDTHFTLAKI) are cytoplasmic.

In terms of assembly, interacts with TRAF2, TRAF3 and TRAF5. As to expression, activated T-cells.

It is found in the membrane. In terms of biological role, receptor for TNFSF4/OX40L/GP34. Is a costimulatory molecule implicated in long-term T-cell immunity. The sequence is that of Tumor necrosis factor receptor superfamily member 4 (Tnfrsf4) from Rattus norvegicus (Rat).